The sequence spans 228 residues: Prolactin-2A1 (228 aa).

The first 29 residues, methionine 1–leucine 29, serve as a signal peptide directing secretion. Cystine bridges form between cysteine 87-cysteine 203 and cysteine 220-cysteine 228.

Belongs to the somatotropin/prolactin family. In terms of tissue distribution, expressed specifically in the placenta. Highly expressed in invasive trophoblast cells lining the central placental vessel.

It is found in the secreted. In Rattus norvegicus (Rat), this protein is Prolactin-2A1 (Prl2a1).